A 248-amino-acid chain; its full sequence is MSGHSKWATTKHKKAVIDARRGKLFAKLIKNIEVAARVGGPDPNGNPTLADAIAKARDQSVPNDNIERAIRRGAGLEAGGTDWEPIIYEGYGPGGVALLIECLTDNRNRAASEVRTTMTRNGGSMADPGSVAYLFNRKGIVIVPKEGRSEDDVLAAVLDAGAEEVNDLGESFEVVSEPGDLTRVRDALSAAGIRYESADVAWQPTVNVPLDDDTARKVLRLIEALEDCDDVQAVWANFDISDAVLAEV.

It belongs to the TACO1 family.

Its subcellular location is the cytoplasm. This chain is Probable transcriptional regulatory protein Acel_1346, found in Acidothermus cellulolyticus (strain ATCC 43068 / DSM 8971 / 11B).